Reading from the N-terminus, the 304-residue chain is Homoserine kinase (304 aa).

86-96 (PLARGLGSSAA) contributes to the ATP binding site.

It belongs to the GHMP kinase family. Homoserine kinase subfamily.

The protein localises to the cytoplasm. The enzyme catalyses L-homoserine + ATP = O-phospho-L-homoserine + ADP + H(+). The protein operates within amino-acid biosynthesis; L-threonine biosynthesis; L-threonine from L-aspartate: step 4/5. In terms of biological role, catalyzes the ATP-dependent phosphorylation of L-homoserine to L-homoserine phosphate. The sequence is that of Homoserine kinase from Carboxydothermus hydrogenoformans (strain ATCC BAA-161 / DSM 6008 / Z-2901).